The sequence spans 208 residues: NADH-ubiquinone oxidoreductase chain 4 (208 aa).

The next 6 helical transmembrane spans lie at 23-43 (VWINVTSYSFVINMIALVTLW), 60-80 (SLSSPLTMLTIWLLPLMLLAS), 93-113 (KMYISLLITLQVLLIMTFSAN), 114-134 (ELIMFYILFEATLIPTLIIIT), 147-167 (LYFLFYTLIGSIPLLIALISI), and 188-208 (PTWSSHILWLACIMAFMIKMP).

It belongs to the complex I subunit 4 family. Core subunit of respiratory chain NADH dehydrogenase (Complex I) which is composed of 45 different subunits.

It is found in the mitochondrion inner membrane. The enzyme catalyses a ubiquinone + NADH + 5 H(+)(in) = a ubiquinol + NAD(+) + 4 H(+)(out). Its function is as follows. Core subunit of the mitochondrial membrane respiratory chain NADH dehydrogenase (Complex I) which catalyzes electron transfer from NADH through the respiratory chain, using ubiquinone as an electron acceptor. Essential for the catalytic activity and assembly of complex I. The chain is NADH-ubiquinone oxidoreductase chain 4 (MT-ND4) from Phodopus sungorus (Striped hairy-footed hamster).